The primary structure comprises 207 residues: ATP synthase subunit b 2 (207 aa).

The chain crosses the membrane as a helical span at residues 53 to 72; the sequence is TYASQLLWLVITFSVFYLLM.

The protein belongs to the ATPase B chain family. F-type ATPases have 2 components, F(1) - the catalytic core - and F(0) - the membrane proton channel. F(1) has five subunits: alpha(3), beta(3), gamma(1), delta(1), epsilon(1). F(0) has three main subunits: a(1), b(2) and c(10-14). The alpha and beta chains form an alternating ring which encloses part of the gamma chain. F(1) is attached to F(0) by a central stalk formed by the gamma and epsilon chains, while a peripheral stalk is formed by the delta and b chains.

The protein resides in the cell inner membrane. Its function is as follows. F(1)F(0) ATP synthase produces ATP from ADP in the presence of a proton or sodium gradient. F-type ATPases consist of two structural domains, F(1) containing the extramembraneous catalytic core and F(0) containing the membrane proton channel, linked together by a central stalk and a peripheral stalk. During catalysis, ATP synthesis in the catalytic domain of F(1) is coupled via a rotary mechanism of the central stalk subunits to proton translocation. Component of the F(0) channel, it forms part of the peripheral stalk, linking F(1) to F(0). The b'-subunit is a diverged and duplicated form of b found in plants and photosynthetic bacteria. This Rhizobium leguminosarum bv. trifolii (strain WSM2304) protein is ATP synthase subunit b 2 (atpF2).